A 130-amino-acid chain; its full sequence is Small ribosomal subunit protein uS11c (130 aa).

Belongs to the universal ribosomal protein uS11 family. As to quaternary structure, part of the 30S ribosomal subunit.

It localises to the plastid. The protein localises to the chloroplast. The polypeptide is Small ribosomal subunit protein uS11c (Marchantia polymorpha (Common liverwort)).